Reading from the N-terminus, the 328-residue chain is 3-dehydroquinate synthase (328 aa).

This sequence belongs to the archaeal-type DHQ synthase family.

It carries out the reaction 2-amino-2,3,7-trideoxy-D-lyxo-hept-6-ulosonate + NAD(+) + H2O = 3-dehydroquinate + NH4(+) + NADH + H(+). Catalyzes the oxidative deamination and cyclization of 2-amino-3,7-dideoxy-D-threo-hept-6-ulosonic acid (ADH) to yield 3-dehydroquinate (DHQ), which is fed into the canonical shikimic pathway of aromatic amino acid biosynthesis. The protein is 3-dehydroquinate synthase of Methanospirillum hungatei JF-1 (strain ATCC 27890 / DSM 864 / NBRC 100397 / JF-1).